The following is a 341-amino-acid chain: Anthranilate phosphoribosyltransferase (341 aa).

5-phospho-alpha-D-ribose 1-diphosphate contacts are provided by residues Gly-83, Ser-91, 93–96 (NTST), 111–115 (KHGNR), and Ser-123. Gly-83 is an anthranilate binding site. Residue Ser-95 coordinates Mg(2+). Asn-114 contributes to the anthranilate binding site. Residue Arg-169 participates in anthranilate binding. Asp-228 and Glu-229 together coordinate Mg(2+).

This sequence belongs to the anthranilate phosphoribosyltransferase family. As to quaternary structure, homodimer. The cofactor is Mg(2+).

The enzyme catalyses N-(5-phospho-beta-D-ribosyl)anthranilate + diphosphate = 5-phospho-alpha-D-ribose 1-diphosphate + anthranilate. The protein operates within amino-acid biosynthesis; L-tryptophan biosynthesis; L-tryptophan from chorismate: step 2/5. Catalyzes the transfer of the phosphoribosyl group of 5-phosphorylribose-1-pyrophosphate (PRPP) to anthranilate to yield N-(5'-phosphoribosyl)-anthranilate (PRA). The polypeptide is Anthranilate phosphoribosyltransferase (Hyphomonas neptunium (strain ATCC 15444)).